Consider the following 127-residue polypeptide: uncharacterized protein (127 aa).

Residues 12-32 (FFFLILFYFCIISSFLFLFIF) traverse the membrane as a helical segment.

The protein localises to the membrane. This is an uncharacterized protein from Saccharomyces cerevisiae (strain ATCC 204508 / S288c) (Baker's yeast).